A 136-amino-acid polypeptide reads, in one-letter code: Histone H3.3C (136 aa).

The interval 1–44 is disordered; that stretch reads MARTKQTARKSTGGKAPRKQLVTKAARKSAPSTGGMKKPHRYRP. Arg3 is subject to Asymmetric dimethylarginine; by PRMT6; alternate. Residue Arg3 is modified to Citrulline; alternate. Thr4 carries the phosphothreonine; by HASPIN modification. Lys5 bears the Allysine; alternate mark. N6,N6,N6-trimethyllysine; alternate is present on Lys5. Lys5 carries the N6,N6-dimethyllysine; alternate modification. Residue Lys5 is modified to N6-(2-hydroxyisobutyryl)lysine; alternate. Lys5 carries the post-translational modification N6-(beta-hydroxybutyryl)lysine; alternate. The residue at position 5 (Lys5) is an N6-acetyllysine; alternate. The residue at position 5 (Lys5) is an N6-methyllysine; alternate. The residue at position 6 (Gln6) is a 5-glutamyl dopamine; alternate. Gln6 is subject to 5-glutamyl serotonin; alternate. Thr7 is modified (phosphothreonine; by PKC). Arg9 is modified (symmetric dimethylarginine). Lys10 carries the post-translational modification N6,N6,N6-trimethyllysine; alternate. Residue Lys10 is modified to N6,N6-dimethyllysine; alternate. Lys10 bears the N6-(2-hydroxyisobutyryl)lysine; alternate mark. N6-(beta-hydroxybutyryl)lysine; alternate is present on Lys10. Lys10 carries the post-translational modification N6-acetyllysine; alternate. Position 10 is an N6-methyllysine; alternate (Lys10). At Lys10 the chain carries N6-lactoyllysine; alternate. Ser11 is subject to ADP-ribosylserine; alternate. Ser11 carries the phosphoserine; alternate; by AURKB, AURKC, RPS6KA3, RPS6KA4 and RPS6KA5 modification. Thr12 carries the post-translational modification Phosphothreonine; by PKC. Lys15 is subject to N6-(2-hydroxyisobutyryl)lysine; alternate. Lys15 bears the N6-(beta-hydroxybutyryl)lysine; alternate mark. Lys15 is subject to N6-acetyllysine; alternate. An N6-lactoyllysine; alternate modification is found at Lys15. Lys15 bears the N6-glutaryllysine; alternate mark. At Lys15 the chain carries N6-succinyllysine; alternate. Arg18 carries the asymmetric dimethylarginine modification. N6-(2-hydroxyisobutyryl)lysine; alternate is present on residues Lys19 and Lys24. An N6-(beta-hydroxybutyryl)lysine; alternate mark is found at Lys19 and Lys24. Residues Lys19 and Lys24 each carry the N6-acetyllysine; alternate modification. Residues Lys19 and Lys24 each carry the N6-methyllysine; alternate modification. Lys19 and Lys24 each carry N6-lactoyllysine; alternate. Residues Lys19 and Lys24 each carry the N6-glutaryllysine; alternate modification. N6-butyryllysine; alternate is present on residues Lys19 and Lys24. Residue Arg27 is modified to Citrulline. Residue Lys28 is modified to N6,N6,N6-trimethyllysine; alternate. Position 28 is an N6,N6-dimethyllysine; alternate (Lys28). At Lys28 the chain carries N6-(2-hydroxyisobutyryl)lysine; alternate. Lys28 is modified (N6-acetyllysine; alternate). Lys28 carries the post-translational modification N6-methyllysine; alternate. At Lys28 the chain carries N6-lactoyllysine; alternate. An N6-glutaryllysine; alternate modification is found at Lys28. At Ser29 the chain carries ADP-ribosylserine; alternate. Ser29 carries the post-translational modification Phosphoserine; alternate; by AURKB, AURKC and RPS6KA5. Ser32 carries the phosphoserine modification. Lys37 is subject to N6,N6,N6-trimethyllysine; alternate. N6,N6-dimethyllysine; alternate is present on Lys37. The residue at position 37 (Lys37) is an N6-(2-hydroxyisobutyryl)lysine; alternate. Residue Lys37 is modified to N6-acetyllysine; alternate. Lys37 is subject to N6-methyllysine; alternate. An N6-methyllysine modification is found at Lys38. A Phosphotyrosine modification is found at Tyr42. Lys57 bears the N6,N6,N6-trimethyllysine; alternate mark. Lys57 is modified (N6-(2-hydroxyisobutyryl)lysine; alternate). Lys57 is modified (N6-(beta-hydroxybutyryl)lysine; alternate). At Lys57 the chain carries N6-acetyllysine; alternate. Position 57 is an N6-methyllysine; alternate (Lys57). Residue Lys57 is modified to N6-lactoyllysine; alternate. The residue at position 57 (Lys57) is an N6-glutaryllysine; alternate. Lys57 bears the N6-succinyllysine; alternate mark. Ser58 is subject to Phosphoserine. 2 positions are modified to N6-(2-hydroxyisobutyryl)lysine; alternate: Lys65 and Lys80. Residues Lys65 and Lys80 each carry the N6-methyllysine; alternate modification. Lys80 is subject to N6,N6,N6-trimethyllysine; alternate. Lys80 carries the N6,N6-dimethyllysine; alternate modification. An N6-acetyllysine; alternate modification is found at Lys80. Position 80 is an N6-lactoyllysine; alternate (Lys80). Lys80 is modified (N6-glutaryllysine; alternate). Position 80 is an N6-succinyllysine; alternate (Lys80). Thr81 bears the Phosphothreonine mark. At Ser87 the chain carries Phosphoserine. Thr108 carries the post-translational modification Phosphothreonine. The residue at position 116 (Lys116) is an N6-acetyllysine; alternate. An N6-glutaryllysine; alternate modification is found at Lys116.

It belongs to the histone H3 family. The nucleosome is a histone octamer containing two molecules each of H2A, H2B, H3 and H4 assembled in one H3-H4 heterotetramer and two H2A-H2B heterodimers. The octamer wraps approximately 147 bp of DNA. Acetylation is generally linked to gene activation. Acetylation on Lys-19 (H3K18ac) favors methylation at Arg-18 (H3R17me). Post-translationally, citrullination at Arg-18 by PADI4 impairs methylation and represses transcription. In terms of processing, asymmetric dimethylation at Arg-18 (H3R17me2a) by CARM1 is linked to gene activation. Asymmetric dimethylation at Arg-3 (H3R2me2a) by PRMT6 is linked to gene repression and is mutually exclusive with H3 Lys-5 methylation (H3K4me2 and H3K4me3). H3R2me2a is present at the 3' of genes regardless of their transcription state and is enriched on inactive promoters, while it is absent on active promoters. Methylation at Lys-5 (H3K4me) and Lys-80 (H3K79me) are linked to gene activation. Methylation at Lys-5 (H3K4me) facilitates subsequent acetylation of H3 and H4. Methylation at Lys-80 (H3K79me) is associated with DNA double-strand break (DSB) responses and is a specific target for TP53BP1. Methylation at Lys-10 (H3K9me) and Lys-28 (H3K27me) are linked to gene repression. Methylation at Lys-10 (H3K9me) is a specific target for HP1 proteins (CBX1, CBX3 and CBX5) and prevents subsequent phosphorylation at Ser-11 (H3S10ph) and acetylation of H3 and H4. Methylation at Lys-5 (H3K4me) and Lys-80 (H3K79me) require preliminary monoubiquitination of H2B at 'Lys-120'. Methylation at Lys-10 (H3K9me) and Lys-28 (H3K27me) are enriched in inactive X chromosome chromatin. Monomethylation at Lys-57 (H3K56me1) by EHMT2/G9A in G1 phase promotes interaction with PCNA and is required for DNA replication. Post-translationally, phosphorylated at Thr-4 (H3T3ph) by HASPIN during prophase and dephosphorylated during anaphase. Phosphorylation at Ser-11 (H3S10ph) by AURKB is crucial for chromosome condensation and cell-cycle progression during mitosis and meiosis. In addition phosphorylation at Ser-11 (H3S10ph) by RPS6KA4 and RPS6KA5 is important during interphase because it enables the transcription of genes following external stimulation, like mitogens, stress, growth factors or UV irradiation and result in the activation of genes, such as c-fos and c-jun. Phosphorylation at Ser-11 (H3S10ph), which is linked to gene activation, prevents methylation at Lys-10 (H3K9me) but facilitates acetylation of H3 and H4. Phosphorylation at Ser-11 (H3S10ph) by AURKB mediates the dissociation of HP1 proteins (CBX1, CBX3 and CBX5) from heterochromatin. Phosphorylation at Ser-11 (H3S10ph) is also an essential regulatory mechanism for neoplastic cell transformation. Phosphorylated at Ser-29 (H3S28ph) by MAP3K20 isoform 1, RPS6KA5 or AURKB during mitosis or upon ultraviolet B irradiation. Phosphorylation at Thr-7 (H3T6ph) by PRKCB is a specific tag for epigenetic transcriptional activation that prevents demethylation of Lys-5 (H3K4me) by LSD1/KDM1A. At centromeres, specifically phosphorylated at Thr-12 (H3T11ph) from prophase to early anaphase, by DAPK3 and PKN1. Phosphorylation at Thr-12 (H3T11ph) by PKN1 or isoform M2 of PKM (PKM2) is a specific tag for epigenetic transcriptional activation that promotes demethylation of Lys-10 (H3K9me) by KDM4C/JMJD2C. Phosphorylation at Tyr-42 (H3Y41ph) by JAK2 promotes exclusion of CBX5 (HP1 alpha) from chromatin. In terms of processing, lysine deamination at Lys-5 (H3K4all) to form allysine is mediated by LOXL2. Allysine formation by LOXL2 only takes place on H3K4me3 and results in gene repression. Butyrylation of histones marks active promoters and competes with histone acetylation. It is present during late spermatogenesis. Post-translationally, succinylation at Lys-80 (H3K79succ) by KAT2A takes place with a maximum frequency around the transcription start sites of genes. It gives a specific tag for epigenetic transcription activation. In terms of processing, serine ADP-ribosylation constitutes the primary form of ADP-ribosylation of proteins in response to DNA damage. Serine ADP-ribosylation at Ser-11 (H3S10ADPr) is mutually exclusive with phosphorylation at Ser-11 (H3S10ph) and impairs acetylation at Lys-10 (H3K9ac).

Its subcellular location is the nucleus. The protein resides in the chromosome. In terms of biological role, core component of nucleosome. Nucleosomes wrap and compact DNA into chromatin, limiting DNA accessibility to the cellular machineries which require DNA as a template. Histones thereby play a central role in transcription regulation, DNA repair, DNA replication and chromosomal stability. DNA accessibility is regulated via a complex set of post-translational modifications of histones, also called histone code, and nucleosome remodeling. The sequence is that of Histone H3.3C from Bos taurus (Bovine).